A 93-amino-acid polypeptide reads, in one-letter code: uncharacterized protein (93 aa).

The protein resides in the plastid. It is found in the chloroplast. This is an uncharacterized protein from Diacronema lutheri (Unicellular marine alga).